A 759-amino-acid polypeptide reads, in one-letter code: Phosphoribosylformylglycinamidine synthase subunit PurL (759 aa).

Residue histidine 46 is part of the active site. Residues tyrosine 49 and lysine 88 each contribute to the ATP site. Glutamate 90 is a Mg(2+) binding site. Substrate is bound by residues 91 to 94 and arginine 113; that span reads SHNH. Catalysis depends on histidine 92, which acts as the Proton acceptor. A Mg(2+)-binding site is contributed by aspartate 114. Glutamine 237 provides a ligand contact to substrate. Mg(2+) is bound at residue aspartate 265. 309-311 contributes to the substrate binding site; it reads ESQ. ATP is bound by residues aspartate 498 and glycine 535. Residue asparagine 536 coordinates Mg(2+). Substrate is bound at residue serine 538.

This sequence belongs to the FGAMS family. In terms of assembly, monomer. Part of the FGAM synthase complex composed of 1 PurL, 1 PurQ and 2 PurS subunits.

The protein resides in the cytoplasm. The catalysed reaction is N(2)-formyl-N(1)-(5-phospho-beta-D-ribosyl)glycinamide + L-glutamine + ATP + H2O = 2-formamido-N(1)-(5-O-phospho-beta-D-ribosyl)acetamidine + L-glutamate + ADP + phosphate + H(+). It functions in the pathway purine metabolism; IMP biosynthesis via de novo pathway; 5-amino-1-(5-phospho-D-ribosyl)imidazole from N(2)-formyl-N(1)-(5-phospho-D-ribosyl)glycinamide: step 1/2. In terms of biological role, part of the phosphoribosylformylglycinamidine synthase complex involved in the purines biosynthetic pathway. Catalyzes the ATP-dependent conversion of formylglycinamide ribonucleotide (FGAR) and glutamine to yield formylglycinamidine ribonucleotide (FGAM) and glutamate. The FGAM synthase complex is composed of three subunits. PurQ produces an ammonia molecule by converting glutamine to glutamate. PurL transfers the ammonia molecule to FGAR to form FGAM in an ATP-dependent manner. PurS interacts with PurQ and PurL and is thought to assist in the transfer of the ammonia molecule from PurQ to PurL. This Anaeromyxobacter sp. (strain K) protein is Phosphoribosylformylglycinamidine synthase subunit PurL.